A 357-amino-acid polypeptide reads, in one-letter code: MLGRALVRSFVQPTAAITTQLAGVHHHQEATDMKRFTGVTRSNKAKANRNTHVNEKLFRRMRGRKTLLIELPEDSAREKEAEMSPGEMRTELLKRGINPYKEAQPRVWNEAQVTFQSIYGIADPYVPPENPGSFTDVNNKFDEVKQRIQHKFYNWRMGTNRIRKKQGFEKFDIKTFCAKAEDIYVQAHRALEQRDKTAMYKYITEYAFAKMWPDVENGSVRFELISVLEPSRVVAVRCFDNPPKSGNDIAQITVRMHTRQKLAVYDRFGGLLLGSEDEEKDVVEYVVFENHIAVVDGEWRLHGKIYPKWIDAKQGMVGTQMLSAEQVEKQHAEAKALPLRTTEKLEEAKKEKEQQEI.

A disordered region spans residues 333-357 (EAKALPLRTTEKLEEAKKEKEQQEI). Residues 341-357 (TTEKLEEAKKEKEQQEI) are compositionally biased toward basic and acidic residues.

It belongs to the mitochondrion-specific ribosomal protein mL45 family.

It is found in the mitochondrion. The sequence is that of Large ribosomal subunit protein mL45 (mrpl-45) from Caenorhabditis elegans.